A 230-amino-acid polypeptide reads, in one-letter code: Ribonuclease 3 (230 aa).

The RNase III domain occupies 1 to 134 (MKQLEELLST…FLGALLLDKG (134 aa)). Mg(2+) is bound at residue E47. Residue D51 is part of the active site. 2 residues coordinate Mg(2+): D120 and E123. Residue E123 is part of the active site. The 70-residue stretch at 160 to 229 (DYKTCLQEFL…AKNALAQLSE (70 aa)) folds into the DRBM domain.

The protein belongs to the ribonuclease III family. In terms of assembly, homodimer. Requires Mg(2+) as cofactor.

The protein resides in the cytoplasm. It carries out the reaction Endonucleolytic cleavage to 5'-phosphomonoester.. Functionally, digests double-stranded RNA. Involved in the processing of primary rRNA transcript to yield the immediate precursors to the large and small rRNAs (23S and 16S). Processes some mRNAs, and tRNAs when they are encoded in the rRNA operon. Processes pre-crRNA and tracrRNA of type II CRISPR loci if present in the organism. The sequence is that of Ribonuclease 3 from Streptococcus pyogenes serotype M3 (strain SSI-1).